The sequence spans 279 residues: Probable flavonol synthase 4 (279 aa).

A disordered region spans residues 1-25 (MEVERDQHKPPLSLQNNKIPSSQNF). Residues 13 to 25 (SLQNNKIPSSQNF) are compositionally biased toward polar residues. A Fe2OG dioxygenase domain is found at 156–256 (GAGYLMKINY…RMSSVVHIKP (101 aa)). Position 164–166 (164–166 (NYY)) interacts with 2-oxoglutarate. Histidine 181, aspartate 183, and histidine 237 together coordinate Fe cation. 247–249 (RMS) is a binding site for 2-oxoglutarate.

It belongs to the iron/ascorbate-dependent oxidoreductase family. The cofactor is Fe(2+).

It carries out the reaction a (2R,3R)-dihydroflavonol + 2-oxoglutarate + O2 = a flavonol + succinate + CO2 + H2O. Its pathway is secondary metabolite biosynthesis; flavonoid biosynthesis. In Arabidopsis thaliana (Mouse-ear cress), this protein is Probable flavonol synthase 4 (FLS4).